The chain runs to 936 residues: Phosphoenolpyruvate carboxylase (936 aa).

The tract at residues 1 to 20 is disordered; the sequence is MSSLNLSAGPEPVSERPDDA. Catalysis depends on residues His164 and Lys598.

This sequence belongs to the PEPCase type 1 family. The cofactor is Mg(2+).

The catalysed reaction is oxaloacetate + phosphate = phosphoenolpyruvate + hydrogencarbonate. Its function is as follows. Forms oxaloacetate, a four-carbon dicarboxylic acid source for the tricarboxylic acid cycle. This chain is Phosphoenolpyruvate carboxylase (ppc), found in Rhodopseudomonas palustris (strain ATCC BAA-98 / CGA009).